Consider the following 83-residue polypeptide: Retinal cone rhodopsin-sensitive cGMP 3',5'-cyclic phosphodiesterase subunit gamma (83 aa).

Polar residues predominate over residues 1–17 (MSDNTVLAPPTSNQGPT). Positions 1 to 51 (MSDNTVLAPPTSNQGPTTPRKGPPKFKQRQTRQFKSKPPKKGVKGFGDDIP) are disordered. Positions 22 to 43 (GPPKFKQRQTRQFKSKPPKKGV) are enriched in basic residues.

Belongs to the rod/cone cGMP-PDE gamma subunit family. Tetramer composed of two catalytic chains (alpha and beta), and two inhibitory chains (gamma).

The enzyme catalyses 3',5'-cyclic GMP + H2O = GMP + H(+). Its function is as follows. Participates in processes of transmission and amplification of the visual signal. cGMP-PDEs are the effector molecules in G-protein-mediated phototransduction in vertebrate rods and cones. In Bos taurus (Bovine), this protein is Retinal cone rhodopsin-sensitive cGMP 3',5'-cyclic phosphodiesterase subunit gamma (PDE6H).